Reading from the N-terminus, the 343-residue chain is Homeobox protein Hox-D13 (343 aa).

Disordered regions lie at residues 1–28 (MSRAGSWDMDGLRADGGGAGGAPASSSS) and 78–115 (GTSERTGSSSSSSSSAVVAARPEAPPAKECPAPTPAAA). Residues 85 to 115 (SSSSSSSSAVVAARPEAPPAKECPAPTPAAA) show a composition bias toward low complexity. The segment at residues 276–335 (GRKKRVPYTKLQLKELENEYAINKFINKDKRRRISAATNLSERQVTIWFQNRRVKDKKIV) is a DNA-binding region (homeobox).

This sequence belongs to the Abd-B homeobox family.

The protein localises to the nucleus. In terms of biological role, sequence-specific transcription factor that binds gene promoters and activates their transcription. Part of a developmental regulatory system that provides cells with specific positional identities on the anterior-posterior axis. The sequence is that of Homeobox protein Hox-D13 (HOXD13) from Homo sapiens (Human).